We begin with the raw amino-acid sequence, 147 residues long: Heavy metal-associated isoprenylated plant protein 27 (147 aa).

The region spanning 18–82 (FQKVEIKVKM…VMHRTGKKAE (65 aa)) is the HMA domain. Positions 29 and 32 each coordinate a metal cation. Cys-144 bears the Cysteine methyl ester mark. A lipid anchor (S-farnesyl cysteine) is attached at Cys-144. The propeptide at 145–147 (TIM) is removed in mature form.

This sequence belongs to the HIPP family. In terms of assembly, interacts with UBP16. Interacts with ZHD11/HB29.

It localises to the membrane. Functionally, heavy-metal-binding protein. Binds cadmium. May be involved in cadmium transport and play a role in cadmium detoxification. The polypeptide is Heavy metal-associated isoprenylated plant protein 27 (Arabidopsis thaliana (Mouse-ear cress)).